Consider the following 592-residue polypeptide: Testis-specific serine kinase substrate (592 aa).

Residue Ser217 is modified to Phosphoserine. The tract at residues 232–308 is disordered; the sequence is QDETPRRQEA…VPAGWGMGPR (77 aa). Over residues 234–264 the composition is skewed to basic and acidic residues; it reads ETPRRQEAELQEPEEKQEPEEKQEPEEKQKP. The segment covering 269 to 281 has biased composition (polar residues); that stretch reads SWNSLGPAATSQG. At Ser288 the chain carries Phosphoserine; by TSSK1 and TSSK2. Phosphoserine is present on Ser316. Positions 566 to 592 are disordered; it reads LEGSTGTMGGGSSAGTPPKQGGSAPEQ.

Post-translationally, phosphorylated on serine residue(s) by STK22A/TSSK1 and STK22B/TSSK2. Highly expressed in testis. Expressed at low levels in prostate, female breast, placenta, ovary and thymus.

The protein localises to the cytoplasm. Its subcellular location is the cytoskeleton. It is found in the microtubule organizing center. It localises to the centrosome. The protein resides in the centriole. May play a role in testicular physiology, most probably in the process of spermatogenesis or spermatid development. The polypeptide is Testis-specific serine kinase substrate (TSKS) (Homo sapiens (Human)).